Here is a 362-residue protein sequence, read N- to C-terminus: Outer envelope protein 39, chloroplastic (362 aa).

Belongs to the OEP80 (TC 1.B.33.2) family. As to expression, expressed in germinating seeds. Expressed in the vasculature of roots, cotyledons and leaves.

Its subcellular location is the plastid. The protein localises to the chloroplast outer membrane. In terms of biological role, beta-barrel pore-forming protein which possesses voltage-dependent channel activity. Required for proper plastid development. Involved in the maintenance of metabolic homeostasis of full-grown plants. This is Outer envelope protein 39, chloroplastic from Arabidopsis thaliana (Mouse-ear cress).